A 250-amino-acid chain; its full sequence is Anamorsin homolog 2 (250 aa).

The N-terminal SAM-like domain stretch occupies residues 1 to 102 (MNLKITINQQ…QTKKINIPQQ (102 aa)). Residues 102–149 (QDFNNCYGKYDYIEQKFQNQINFFKQVDLKGNQETIDENELLNDGVEV) form a linker region. [2Fe-2S] cluster contacts are provided by Cys-155, Cys-162, Cys-165, and Cys-167. A fe-S binding site A region spans residues 155-167 (CASKPRACANCTC). [4Fe-4S] cluster is bound by residues Cys-193, Cys-196, Cys-204, and Cys-207. 2 consecutive short sequence motifs (cx2C motif) follow at residues 193–196 (CGSC) and 204–207 (CANC). Positions 193–207 (CGSCYLGDAFRCANC) are fe-S binding site B.

The protein belongs to the anamorsin family. Monomer. Requires [2Fe-2S] cluster as cofactor. [4Fe-4S] cluster is required as a cofactor.

The protein resides in the cytoplasm. The protein localises to the mitochondrion intermembrane space. In terms of biological role, component of the cytosolic iron-sulfur (Fe-S) protein assembly (CIA) machinery. Required for the maturation of extramitochondrial Fe-S proteins. Part of an electron transfer chain functioning in an early step of cytosolic Fe-S biogenesis, facilitating the de novo assembly of a [4Fe-4S] cluster on the cytosolic Fe-S scaffold complex. Electrons are transferred from NADPH via a FAD- and FMN-containing diflavin oxidoreductase. Together with the diflavin oxidoreductase, also required for the assembly of the diferric tyrosyl radical cofactor of ribonucleotide reductase (RNR), probably by providing electrons for reduction during radical cofactor maturation in the catalytic small subunit. The sequence is that of Anamorsin homolog 2 from Paramecium tetraurelia.